A 499-amino-acid chain; its full sequence is Glycerol kinase (499 aa).

An ADP-binding site is contributed by Thr-15. The ATP site is built by Thr-15, Thr-16, and Ser-17. Thr-15 provides a ligand contact to sn-glycerol 3-phosphate. Arg-19 lines the ADP pocket. 4 residues coordinate sn-glycerol 3-phosphate: Arg-85, Glu-86, Tyr-137, and Asp-246. Positions 85, 86, 137, 246, and 247 each coordinate glycerol. Residues Thr-268 and Gly-311 each coordinate ADP. Residues Thr-268, Gly-311, Gln-315, and Gly-412 each coordinate ATP. The ADP site is built by Gly-412 and Asn-416.

It belongs to the FGGY kinase family.

The enzyme catalyses glycerol + ATP = sn-glycerol 3-phosphate + ADP + H(+). Its pathway is polyol metabolism; glycerol degradation via glycerol kinase pathway; sn-glycerol 3-phosphate from glycerol: step 1/1. Its activity is regulated as follows. Inhibited by fructose 1,6-bisphosphate (FBP). Functionally, key enzyme in the regulation of glycerol uptake and metabolism. Catalyzes the phosphorylation of glycerol to yield sn-glycerol 3-phosphate. This Parabacteroides distasonis (strain ATCC 8503 / DSM 20701 / CIP 104284 / JCM 5825 / NCTC 11152) protein is Glycerol kinase.